The sequence spans 458 residues: Bifunctional protein GlmU (458 aa).

Residues 1–229 (MKEKALSIVI…FMEVEGVNNR (229 aa)) form a pyrophosphorylase region. Residues 11–14 (LAAG), lysine 25, glutamine 76, 81–82 (GT), 103–105 (YGD), glycine 140, glutamate 154, asparagine 169, and asparagine 227 each bind UDP-N-acetyl-alpha-D-glucosamine. Aspartate 105 contacts Mg(2+). Asparagine 227 provides a ligand contact to Mg(2+). Residues 230–250 (QQLARLERYYQRKQADNLLLA) form a linker region. An N-acetyltransferase region spans residues 251 to 458 (GVALADPERF…WQRPTKQTKK (208 aa)). UDP-N-acetyl-alpha-D-glucosamine contacts are provided by arginine 333 and lysine 351. Histidine 363 serves as the catalytic Proton acceptor. Tyrosine 366 and asparagine 377 together coordinate UDP-N-acetyl-alpha-D-glucosamine. Residues alanine 380, 386–387 (NY), serine 405, alanine 423, and arginine 440 contribute to the acetyl-CoA site.

The protein in the N-terminal section; belongs to the N-acetylglucosamine-1-phosphate uridyltransferase family. This sequence in the C-terminal section; belongs to the transferase hexapeptide repeat family. Homotrimer. Requires Mg(2+) as cofactor.

The protein resides in the cytoplasm. The catalysed reaction is alpha-D-glucosamine 1-phosphate + acetyl-CoA = N-acetyl-alpha-D-glucosamine 1-phosphate + CoA + H(+). It catalyses the reaction N-acetyl-alpha-D-glucosamine 1-phosphate + UTP + H(+) = UDP-N-acetyl-alpha-D-glucosamine + diphosphate. It participates in nucleotide-sugar biosynthesis; UDP-N-acetyl-alpha-D-glucosamine biosynthesis; N-acetyl-alpha-D-glucosamine 1-phosphate from alpha-D-glucosamine 6-phosphate (route II): step 2/2. The protein operates within nucleotide-sugar biosynthesis; UDP-N-acetyl-alpha-D-glucosamine biosynthesis; UDP-N-acetyl-alpha-D-glucosamine from N-acetyl-alpha-D-glucosamine 1-phosphate: step 1/1. It functions in the pathway bacterial outer membrane biogenesis; LPS lipid A biosynthesis. In terms of biological role, catalyzes the last two sequential reactions in the de novo biosynthetic pathway for UDP-N-acetylglucosamine (UDP-GlcNAc). The C-terminal domain catalyzes the transfer of acetyl group from acetyl coenzyme A to glucosamine-1-phosphate (GlcN-1-P) to produce N-acetylglucosamine-1-phosphate (GlcNAc-1-P), which is converted into UDP-GlcNAc by the transfer of uridine 5-monophosphate (from uridine 5-triphosphate), a reaction catalyzed by the N-terminal domain. The chain is Bifunctional protein GlmU from Pasteurella multocida (strain Pm70).